The chain runs to 299 residues: Serine/threonine-protein kinase 1 (299 aa).

Residues 39 to 277 (IATKPMFEGG…FKGLVSHPWF (239 aa)) form the Protein kinase domain. ATP is bound by residues 45-53 (FEGGRRNNV) and lysine 66. Aspartate 153 functions as the Proton acceptor in the catalytic mechanism.

It belongs to the protein kinase superfamily. Ser/Thr protein kinase family.

It is found in the virion. The protein resides in the host cytoplasm. The enzyme catalyses L-seryl-[protein] + ATP = O-phospho-L-seryl-[protein] + ADP + H(+). It catalyses the reaction L-threonyl-[protein] + ATP = O-phospho-L-threonyl-[protein] + ADP + H(+). Its function is as follows. Essential for viral replication. It may mediate the virus progression through DNA replication. This is Serine/threonine-protein kinase 1 from African swine fever virus (isolate Tick/Malawi/Lil 20-1/1983) (ASFV).